The sequence spans 327 residues: Biotin synthase (327 aa).

Residues 49 to 282 (FNKEKIDLCS…NKVIRLCGGR (234 aa)) enclose the Radical SAM core domain. 3 residues coordinate [4Fe-4S] cluster: C67, C71, and C74. Residues S110, C142, C201, and R277 each contribute to the [2Fe-2S] cluster site.

Belongs to the radical SAM superfamily. Biotin synthase family. Homodimer. [4Fe-4S] cluster is required as a cofactor. The cofactor is [2Fe-2S] cluster.

The enzyme catalyses (4R,5S)-dethiobiotin + (sulfur carrier)-SH + 2 reduced [2Fe-2S]-[ferredoxin] + 2 S-adenosyl-L-methionine = (sulfur carrier)-H + biotin + 2 5'-deoxyadenosine + 2 L-methionine + 2 oxidized [2Fe-2S]-[ferredoxin]. It participates in cofactor biosynthesis; biotin biosynthesis; biotin from 7,8-diaminononanoate: step 2/2. Catalyzes the conversion of dethiobiotin (DTB) to biotin by the insertion of a sulfur atom into dethiobiotin via a radical-based mechanism. In Methanococcus maripaludis (strain DSM 14266 / JCM 13030 / NBRC 101832 / S2 / LL), this protein is Biotin synthase.